A 259-amino-acid chain; its full sequence is Phosphatidylglycerol--prolipoprotein diacylglyceryl transferase (259 aa).

The next 4 helical transmembrane spans lie at 10–30, 50–70, 86–106, and 112–132; these read IGLL…LFAY, IISW…ILFY, WKGG…MYIF, and IKFL…IFLG. A 1,2-diacyl-sn-glycero-3-phospho-(1'-sn-glycerol) is bound at residue Arg133. A run of 3 helical transmembrane segments spans residues 169–189, 197–217, and 227–247; these read LYEA…LFFF, GMLF…IEFV, and ILFN…ILGI.

The protein belongs to the Lgt family.

The protein resides in the cell inner membrane. It carries out the reaction L-cysteinyl-[prolipoprotein] + a 1,2-diacyl-sn-glycero-3-phospho-(1'-sn-glycerol) = an S-1,2-diacyl-sn-glyceryl-L-cysteinyl-[prolipoprotein] + sn-glycerol 1-phosphate + H(+). Its pathway is protein modification; lipoprotein biosynthesis (diacylglyceryl transfer). Functionally, catalyzes the transfer of the diacylglyceryl group from phosphatidylglycerol to the sulfhydryl group of the N-terminal cysteine of a prolipoprotein, the first step in the formation of mature lipoproteins. The polypeptide is Phosphatidylglycerol--prolipoprotein diacylglyceryl transferase (Ehrlichia ruminantium (strain Gardel)).